Consider the following 126-residue polypeptide: Probable DNA-directed RNA polymerase II subunit RPB11 (126 aa).

The protein belongs to the archaeal Rpo11/eukaryotic RPB11/RPC19 RNA polymerase subunit family. As to quaternary structure, component of the RNA polymerase II (Pol II) complex consisting of 12 subunits.

Its subcellular location is the nucleus. In terms of biological role, DNA-dependent RNA polymerase catalyzes the transcription of DNA into RNA using the four ribonucleoside triphosphates as substrates. Component of RNA polymerase II which synthesizes mRNA precursors and many functional non-coding RNAs. Pol II is the central component of the basal RNA polymerase II transcription machinery. It is composed of mobile elements that move relative to each other. RPB11 is part of the core element with the central large cleft. The protein is Probable DNA-directed RNA polymerase II subunit RPB11 of Plasmodium chabaudi chabaudi.